The following is a 106-amino-acid chain: Cell division protein FtsB (106 aa).

Over 1–3 the chain is Cytoplasmic; sequence MGK. A helical membrane pass occupies residues 4–21; it reads LTLLLLALLGWLQYSLWL. Residues 22 to 106 lie on the Periplasmic side of the membrane; sequence GKNGVHDYVR…ASSSQNNLQK (85 aa). A coiled-coil region spans residues 40 to 62; sequence QGSNAKLKARNDQLFAEIDDLNG.

The protein belongs to the FtsB family. In terms of assembly, part of a complex composed of FtsB, FtsL and FtsQ.

The protein resides in the cell inner membrane. Essential cell division protein. May link together the upstream cell division proteins, which are predominantly cytoplasmic, with the downstream cell division proteins, which are predominantly periplasmic. The chain is Cell division protein FtsB from Serratia proteamaculans (strain 568).